The following is a 389-amino-acid chain: Protein MEI2-like 7 (389 aa).

Over residues 170–184 (RRGMSKVYKPRKPQR) the composition is skewed to basic residues. The tract at residues 170–211 (RRGMSKVYKPRKPQRAGRERSPSPSPVFTTRPMSPTPPMQKL) is disordered. Residues 216–320 (TTVMVRNIPN…KIIDIRAARI (105 aa)) form the RRM domain. Residues 351-370 (PRDGSTAGAGAPSPPAVKTV) are disordered.

Probable RNA-binding protein that may play a role in growth regulation. The sequence is that of Protein MEI2-like 7 (OML7) from Oryza sativa subsp. japonica (Rice).